The primary structure comprises 240 residues: Homeobox protein DLX-4 (240 aa).

Disordered stretches follow at residues 44–70 (DLSYSQSYGHPRSYSHPGPATPGDSYL) and 175–194 (LKQSSGEPEEDFSGRPPSLS). A DNA-binding region (homeobox) is located at residues 116 to 175 (LRKPRTIYSSLQLQHLNQRFQHTQYLALPERAQLAAQLGLTQTQVKIWFQNKRSKYKKLL).

The protein belongs to the distal-less homeobox family. In terms of tissue distribution, branchial arches, molar and incisor teeth and limbs.

The protein resides in the nucleus. Its function is as follows. May play a role in determining the production of hemoglobin S. May act as a repressor. During embryonic development, plays a role in palatogenesis. This chain is Homeobox protein DLX-4 (Dlx4), found in Mus musculus (Mouse).